A 295-amino-acid polypeptide reads, in one-letter code: Zinc finger C2H2 protein ECU08_0560 (295 aa).

2 C2H2-type zinc fingers span residues 219-243 and 249-273; these read FVCT…NLMH and HKCR…YKVH.

The sequence is that of Zinc finger C2H2 protein ECU08_0560 from Encephalitozoon cuniculi (strain GB-M1) (Microsporidian parasite).